The chain runs to 217 residues: MPETEKPLFGHPWIFIRGVPSLNFLPPEGPPEVAFAGRSNVGKSSLINALVSQKGLARTSNTPGRTQELNYFVPDGYSGEAGDLPPMAIVDMPGYGYAQAPKEQVDKWTKLVFDYLRGRATLKRVYVLIDSRHGIKKNDDDVLDLLDKAAVSYQLVLTKTDKIKAPAVPKLLAETADKIRKRPAAYPYLLSTSSEKGDGLDELRQAIAETVGIANWK.

The 185-residue stretch at 29-213 (GPPEVAFAGR…RQAIAETVGI (185 aa)) folds into the EngB-type G domain. GTP contacts are provided by residues 37–44 (GRSNVGKS), 64–68 (GRTQE), 91–94 (DMPG), 158–161 (TKTD), and 192–194 (TSS). Mg(2+) is bound by residues Ser44 and Thr66.

This sequence belongs to the TRAFAC class TrmE-Era-EngA-EngB-Septin-like GTPase superfamily. EngB GTPase family. Requires Mg(2+) as cofactor.

Functionally, necessary for normal cell division and for the maintenance of normal septation. The sequence is that of Probable GTP-binding protein EngB from Rhizobium etli (strain ATCC 51251 / DSM 11541 / JCM 21823 / NBRC 15573 / CFN 42).